The following is a 96-amino-acid chain: ATP synthase subunit e, mitochondrial (96 aa).

Ser2 bears the N-acetylserine mark.

The protein belongs to the ATPase e subunit family. As to quaternary structure, F-type ATPases have 2 components, CF(1) - the catalytic core - and CF(0) - the membrane proton channel. In yeast, the dimeric form of ATP synthase consists of 17 polypeptides: alpha, beta, gamma, delta, epsilon, 4 (B), 5 (OSCP), 6 (A), 8, 9 (C), d, E (Tim11), f, g, h, i/j and k.

It is found in the mitochondrion. Its subcellular location is the mitochondrion inner membrane. In terms of biological role, mitochondrial membrane ATP synthase (F(1)F(0) ATP synthase or Complex V) produces ATP from ADP in the presence of a proton gradient across the membrane which is generated by electron transport complexes of the respiratory chain. F-type ATPases consist of two structural domains, F(1) - containing the extramembraneous catalytic core, and F(0) - containing the membrane proton channel, linked together by a central stalk and a peripheral stalk. During catalysis, ATP synthesis in the catalytic domain of F(1) is coupled via a rotary mechanism of the central stalk subunits to proton translocation. Part of the complex F(0) domain. Minor subunit located with subunit a in the membrane. This chain is ATP synthase subunit e, mitochondrial (TIM11), found in Saccharomyces cerevisiae (strain ATCC 204508 / S288c) (Baker's yeast).